The sequence spans 305 residues: Aspartate carbamoyltransferase catalytic subunit (305 aa).

The carbamoyl phosphate site is built by R56 and T57. Residue K85 coordinates L-aspartate. Carbamoyl phosphate-binding residues include R106, H134, and Q137. 2 residues coordinate L-aspartate: R167 and R227. The carbamoyl phosphate site is built by L266 and P267.

It belongs to the aspartate/ornithine carbamoyltransferase superfamily. ATCase family. Heterooligomer of catalytic and regulatory chains.

The catalysed reaction is carbamoyl phosphate + L-aspartate = N-carbamoyl-L-aspartate + phosphate + H(+). It functions in the pathway pyrimidine metabolism; UMP biosynthesis via de novo pathway; (S)-dihydroorotate from bicarbonate: step 2/3. Catalyzes the condensation of carbamoyl phosphate and aspartate to form carbamoyl aspartate and inorganic phosphate, the committed step in the de novo pyrimidine nucleotide biosynthesis pathway. This Thermoplasma acidophilum (strain ATCC 25905 / DSM 1728 / JCM 9062 / NBRC 15155 / AMRC-C165) protein is Aspartate carbamoyltransferase catalytic subunit.